The chain runs to 533 residues: MSTSRVNDEPHKLSATAAALCPLSNCQFSGVVISQIADEQRLEFTNKYKGSCTLLCSYDSQGVVLRIVLDNDQGHVLKEYMIAADTDAAQMGKRSYAVSLESDNLVLRFASEQDQQLFRKVVENVKHLRPKSVFSQRTEESSASQYFQFYGYLSQQQNMMQDYVRTSTYQRAILGNAIDFQDKIILDVGAGSGILSFFAVQAGAAKVYAIEASNMAQYAQQLVESNNVQHKISVIPGKIEEIELPEKVDVIISEPMGYMLYNERMLETYLHARKWLKPQGKMYPTHGDLHIAPFSDESLYSEQYNKANFWYQSAFHGVDLTTLHKEGMKEYFRQPIVDTFDIRICMAKSVRHVCDFLNDKEDDLHKIDIPLQFHILQTGICHGLAFWFDVEFSGSSQNVWLSTSPTAPLTHWYQVRCLLPMPIFIKQGQTLTGRVLLEANRRQSYDVTIDLHIEGTLISSSNTLDLKNPYFRYTGAPVQAPPGTSTQSPSEQYWTQMDTQGTRNTTGMLNGGLSVNGIGDGGMDITHGLIHPH.

Positions 143–452 (ASQYFQFYGY…QSYDVTIDLH (310 aa)) constitute an SAM-dependent MTase PRMT-type domain. Positions 156, 165, 189, 211, 240, and 268 each coordinate S-adenosyl-L-methionine. Arg-503 is subject to Asymmetric dimethylarginine; by autocatalysis.

The protein belongs to the class I-like SAM-binding methyltransferase superfamily. Protein arginine N-methyltransferase family. In terms of assembly, homodimer. In terms of processing, the dimethylated protein is the major form.

The protein localises to the cytoplasm. The protein resides in the nucleus. It catalyses the reaction L-arginyl-[protein] + 2 S-adenosyl-L-methionine = N(omega),N(omega)-dimethyl-L-arginyl-[protein] + 2 S-adenosyl-L-homocysteine + 2 H(+). Functionally, methylates (mono- and asymmetric dimethylation) the guanidino nitrogens of arginyl residues in proteins. May methylate histone H3 at 'Arg-17' and activate transcription via chromatin remodeling. The chain is Histone-arginine methyltransferase CARMER (Art4) from Drosophila willistoni (Fruit fly).